The chain runs to 1921 residues: Disks large homolog 5 (1921 aa).

One can recognise a CARD domain in the interval 1 to 90 (MEPQRRELLA…HLLPILYLNG (90 aa)). Residues 116–143 (ESSSSLSSVGTTGKAPSPPPLLTEQQAN) form a disordered region. A coiled-coil region spans residues 139-601 (EQQANDTVEN…KEARFRQLMA (463 aa)). A phosphoserine mark is found at serine 264 and serine 295. PDZ domains lie at 620 to 710 (VVEF…RRRK) and 705 to 796 (VVRR…LKVF). The tract at residues 857 to 898 (ELGHSGGSSSFLHKPFSGSSSPVSPQACPSTSERSLNSFRSD) is disordered. Residues 873–898 (SGSSSPVSPQACPSTSERSLNSFRSD) show a composition bias toward polar residues. A Phosphoserine modification is found at serine 900. Positions 930 to 1121 (EVPLDKIDPE…RPKSAPSFRP (192 aa)) are disordered. Threonine 984 is modified (phosphothreonine). Residue serine 1000 is modified to Phosphoserine. At threonine 1011 the chain carries Phosphothreonine. Over residues 1017–1030 (RRSDSIKFQHRLET) the composition is skewed to basic and acidic residues. Phosphoserine is present on serine 1021. The span at 1045–1055 (TSPPSAPPPSM) shows a compositional bias: pro residues. At threonine 1183 the chain carries Phosphothreonine. Disordered regions lie at residues 1204–1227 (VLPC…SVQH), 1243–1266 (YSEM…SSSN), and 1280–1343 (PRYP…KDRP). Serine 1209 carries the post-translational modification Phosphoserine. The span at 1217–1227 (GSQSLSPSVQH) shows a compositional bias: polar residues. Residues 1252–1266 (SNSLPSSARLGSSSN) show a composition bias toward low complexity. Serine 1263 is modified (phosphoserine). A compositionally biased stretch (polar residues) spans 1292-1324 (GSLSHSECSTPPRSPLNIDTLSSCSQPQTTAST). Position 1334 is a phosphoserine (serine 1334). Residues 1350–1429 (HVKVQKGSEP…TITILAQYNP (80 aa)) enclose the PDZ 3 domain. Composition is skewed to polar residues over residues 1434–1443 (LNSHSRSSSH), 1450–1460 (PHSTLQGSSAG), and 1483–1495 (AKQS…SVGD). Positions 1434–1501 (LNSHSRSSSH…SVGDTTKKTP (68 aa)) are disordered. The 82-residue stretch at 1504–1585 (RIVFIKKSQL…SLRLKVQYRH (82 aa)) folds into the PDZ 4 domain. Positions 1596–1664 (GDSFYIRALY…PSKYVMDQEF (69 aa)) constitute an SH3 domain. A Phosphoserine modification is found at serine 1669. Residues 1724–1907 (DSVSLAYQRV…ICTQILAMVS (184 aa)) enclose the Guanylate kinase-like domain.

This sequence belongs to the MAGUK family. As to quaternary structure, interacts with MPP1. Interacts with CTNNB1 and with the third SH3 domain of SORBS3 to form a ternary complex. Interacts (via coiled-coil domain) with MARK3. Interacts (via PDZ domain 3) with STK3/MST2 and STK4/MST1. Interacts with SCRIB. Interacts with CTNB1. Interacts with SMO and (via PDZ4 or guanylate kinase-like domain) with KIF7. As to expression, brain (at protein level).

The protein localises to the cell junction. It is found in the cell membrane. It localises to the postsynaptic density. The protein resides in the cytoplasm. Its subcellular location is the cytoskeleton. The protein localises to the cilium basal body. Its function is as follows. Acts as a regulator of the Hippo signaling pathway. Negatively regulates the Hippo signaling pathway by mediating the interaction of MARK3 with STK3/4, bringing them together to promote MARK3-dependent hyperphosphorylation and inactivation of STK3 kinase activity toward LATS1. Positively regulates the Hippo signaling by mediating the interaction of SCRIB with STK4/MST1 and LATS1 which is important for the activation of the Hippo signaling pathway. Involved in regulating cell proliferation, maintenance of epithelial polarity, epithelial-mesenchymal transition (EMT), cell migration and invasion. Plays an important role in dendritic spine formation and synaptogenesis in cortical neurons; regulates synaptogenesis by enhancing the cell surface localization of N-cadherin. Acts as a positive regulator of hedgehog (Hh) signaling pathway. Plays a critical role in the early point of the SMO activity cycle by interacting with SMO at the ciliary base to induce the accumulation of KIF7 and GLI2 at the ciliary tip for GLI2 activation. This is Disks large homolog 5 (Dlg5) from Mus musculus (Mouse).